The chain runs to 370 residues: D-alanine--D-alanine ligase (370 aa).

The ATP-grasp domain maps to 144–352; the sequence is KKIFADAGIP…YGALIERLVD (209 aa). Residue 177–232 participates in ATP binding; it reads EEVLTYPVFVKPANLGSSVGISKATNKTELIEAMTEAFLYDRRVVVEQGVVAREIE. The Mg(2+) site is built by aspartate 306, glutamate 319, and asparagine 321.

It belongs to the D-alanine--D-alanine ligase family. It depends on Mg(2+) as a cofactor. Requires Mn(2+) as cofactor.

It is found in the cytoplasm. It catalyses the reaction 2 D-alanine + ATP = D-alanyl-D-alanine + ADP + phosphate + H(+). It participates in cell wall biogenesis; peptidoglycan biosynthesis. Functionally, cell wall formation. This is D-alanine--D-alanine ligase from Listeria innocua serovar 6a (strain ATCC BAA-680 / CLIP 11262).